The sequence spans 855 residues: Valine--tRNA ligase (855 aa).

A 'HIGH' region motif is present at residues 44–54; sequence PNVTGVLHIGH. The short motif at 524–528 is the 'KMSKS' region element; it reads KMSKT. K527 lines the ATP pocket. Residues 797–827 adopt a coiled-coil conformation; it reads KVEEDPARKQKEREQLEKNIANSKRQLGDEV.

The protein belongs to the class-I aminoacyl-tRNA synthetase family. ValS type 1 subfamily. As to quaternary structure, monomer.

Its subcellular location is the cytoplasm. It carries out the reaction tRNA(Val) + L-valine + ATP = L-valyl-tRNA(Val) + AMP + diphosphate. Its function is as follows. Catalyzes the attachment of valine to tRNA(Val). As ValRS can inadvertently accommodate and process structurally similar amino acids such as threonine, to avoid such errors, it has a 'posttransfer' editing activity that hydrolyzes mischarged Thr-tRNA(Val) in a tRNA-dependent manner. In Solibacter usitatus (strain Ellin6076), this protein is Valine--tRNA ligase.